A 1074-amino-acid chain; its full sequence is Telomerase reverse transcriptase (1074 aa).

The tract at residues 240–265 (DKVSCETMQDGESGKTTLVQKQPGSK) is disordered. Residues 253–262 (GKTTLVQKQP) show a composition bias toward polar residues. The short motif at 300 to 305 (TLGFLY) is the TFLY; involved in RNA binding element. Interaction with RNA template stretches follow at residues 355–360 (LPRRFF) and 461–486 (WKIK…ELSY). The Reverse transcriptase domain occupies 552-877 (TPDQVAALPK…CLFPWCGLLL (326 aa)). Mg(2+) contacts are provided by Asp-649, Asp-810, and Asp-811.

The protein belongs to the reverse transcriptase family. Telomerase subfamily. Catalytic subunit of the telomerase holoenzyme complex composed minimally of TERT and the telomerase RNA template component (TERC). Detected at highest levels in gill, ovary and testis, and at lower levels in brain, eye, heart, skin, spleen and stomach.

The protein localises to the nucleus. It localises to the chromosome. It is found in the telomere. It carries out the reaction DNA(n) + a 2'-deoxyribonucleoside 5'-triphosphate = DNA(n+1) + diphosphate. In terms of biological role, telomerase is a ribonucleoprotein enzyme essential for the replication of chromosome termini in most eukaryotes. It elongates telomeres. It is a reverse transcriptase that adds simple sequence repeats to chromosome ends by copying a template sequence within the RNA component of the enzyme. The polypeptide is Telomerase reverse transcriptase (Takifugu rubripes (Japanese pufferfish)).